A 94-amino-acid polypeptide reads, in one-letter code: Small ribosomal subunit protein bS18 (94 aa).

This sequence belongs to the bacterial ribosomal protein bS18 family. As to quaternary structure, part of the 30S ribosomal subunit. Forms a tight heterodimer with protein bS6.

Functionally, binds as a heterodimer with protein bS6 to the central domain of the 16S rRNA, where it helps stabilize the platform of the 30S subunit. This Polaromonas sp. (strain JS666 / ATCC BAA-500) protein is Small ribosomal subunit protein bS18.